Reading from the N-terminus, the 259-residue chain is Putative electron transfer flavoprotein subunit YgcR (259 aa).

This sequence belongs to the ETF beta-subunit/FixA family. In terms of assembly, ygcQ and YgcR form a heterodimer.

In terms of biological role, may play a role in a redox process. This is Putative electron transfer flavoprotein subunit YgcR (ygcR) from Escherichia coli (strain K12).